A 223-amino-acid chain; its full sequence is MIFAANLKCNHTRASFKIYAKILNKTMGVKCDDIIVFPPSIAFLENENNFIQGAQNFYPCVNGAFTGELGKEHLDEFGIKCVLIGHSERRALGDEEFIKAKFDFAKEHGYKIVFCIGENLDTKNSGKTLEFLKKQLEIIDLNYEKLIIAYEPIYSIGTGVSAQSTDIAKVLEFLASLTKVPLLYGGSVNENNIKEILSVNHCGGVLIGSAALKVENFIKLIKG.

6–8 (NLK) serves as a coordination point for substrate. Residue histidine 86 is the Electrophile of the active site. The active-site Proton acceptor is glutamate 151. The substrate site is built by glycine 157 and serine 187.

This sequence belongs to the triosephosphate isomerase family. As to quaternary structure, homodimer.

The protein localises to the cytoplasm. The enzyme catalyses D-glyceraldehyde 3-phosphate = dihydroxyacetone phosphate. The protein operates within carbohydrate biosynthesis; gluconeogenesis. Its pathway is carbohydrate degradation; glycolysis; D-glyceraldehyde 3-phosphate from glycerone phosphate: step 1/1. Involved in the gluconeogenesis. Catalyzes stereospecifically the conversion of dihydroxyacetone phosphate (DHAP) to D-glyceraldehyde-3-phosphate (G3P). The protein is Triosephosphate isomerase of Campylobacter jejuni subsp. jejuni serotype O:2 (strain ATCC 700819 / NCTC 11168).